A 435-amino-acid polypeptide reads, in one-letter code: Ras association domain-containing protein 9 (435 aa).

The disordered stretch occupies residues methionine 1–methionine 22. The Ras-associating domain maps to glutamate 25–alanine 119. A coiled-coil region spans residues histidine 195 to valine 291. The disordered stretch occupies residues serine 371–serine 423. Basic and acidic residues predominate over residues cysteine 375–glutamate 386. Residues arginine 400 to serine 423 are compositionally biased toward polar residues.

As to quaternary structure, interacts with PAM. In terms of tissue distribution, testis, kidney, skeletal muscle, liver, lung, brain, heart, pituitary gland, adrenal gland and ovary.

It is found in the endosome. May play a role in regulating vesicuar trafficking in cells. This is Ras association domain-containing protein 9 (Rassf9) from Rattus norvegicus (Rat).